The chain runs to 98 residues: uncharacterized protein (98 aa).

In terms of domain architecture, HTH cro/C1-type spans 37 to 91; sequence LITSRQQLGISQKQLETLSGVKQPMIARIEKGQTNPQLETLLKLLAPLGKTLSIV. Positions 48-67 form a DNA-binding region, H-T-H motif; it reads QKQLETLSGVKQPMIARIEK.

This is an uncharacterized protein from Haemophilus influenzae (strain ATCC 51907 / DSM 11121 / KW20 / Rd).